The following is a 321-amino-acid chain: MTDGPRAAAPRFFPQHARHLLGLQGMHPTRIEPFLDLAESYALMSRSRKTPRDRLLGRTVINLFFEDSTRTRTSFELAAKRLGADVINMTVASSSVNKGETLLDTAATLNAMRTDLLVVRHSQSGAPALLARKVEASVVNAGDGTHEHPTQALLDALTIRRHFGTLHGLTVAICGDVSHSRVARSNIHLLTAMGARVRVVGPPTLIPGAIGALGVDVHYTMEDGLRDVDVVMMLRMQRERMSGGQVPSAREYFRFYGLDRKRLAVARPGALVMHPGPMNRGVEIDSRVADSDQSVIREQVEMGVAVRMAVLDLLSRAGDQS.

Carbamoyl phosphate is bound by residues Arg70 and Thr71. An L-aspartate-binding site is contributed by Lys98. The carbamoyl phosphate site is built by Arg120, His148, and Gln151. L-aspartate-binding residues include Arg181 and Arg235. Residues Gly276 and Pro277 each coordinate carbamoyl phosphate.

This sequence belongs to the aspartate/ornithine carbamoyltransferase superfamily. ATCase family. As to quaternary structure, heterododecamer (2C3:3R2) of six catalytic PyrB chains organized as two trimers (C3), and six regulatory PyrI chains organized as three dimers (R2).

The enzyme catalyses carbamoyl phosphate + L-aspartate = N-carbamoyl-L-aspartate + phosphate + H(+). It functions in the pathway pyrimidine metabolism; UMP biosynthesis via de novo pathway; (S)-dihydroorotate from bicarbonate: step 2/3. In terms of biological role, catalyzes the condensation of carbamoyl phosphate and aspartate to form carbamoyl aspartate and inorganic phosphate, the committed step in the de novo pyrimidine nucleotide biosynthesis pathway. This is Aspartate carbamoyltransferase catalytic subunit from Gluconacetobacter diazotrophicus (strain ATCC 49037 / DSM 5601 / CCUG 37298 / CIP 103539 / LMG 7603 / PAl5).